The primary structure comprises 244 residues: Protein-L-isoaspartate O-methyltransferase 2 (244 aa).

Ser-88 is a catalytic residue.

The protein belongs to the methyltransferase superfamily. L-isoaspartyl/D-aspartyl protein methyltransferase family.

It localises to the cytoplasm. It catalyses the reaction [protein]-L-isoaspartate + S-adenosyl-L-methionine = [protein]-L-isoaspartate alpha-methyl ester + S-adenosyl-L-homocysteine. Catalyzes the methyl esterification of L-isoaspartyl residues in peptides and proteins that result from spontaneous decomposition of normal L-aspartyl and L-asparaginyl residues. It plays a role in the repair and/or degradation of damaged proteins. The polypeptide is Protein-L-isoaspartate O-methyltransferase 2 (Shewanella sediminis (strain HAW-EB3)).